A 124-amino-acid polypeptide reads, in one-letter code: U13-hexatoxin-Mg1a (124 aa).

The signal sequence occupies residues 1-17 (MKLSALVFVASVMLVAA). Residues 18–52 (SPVKDVEEPVETHLAADLKTIEELAKYEEAAVQKR) constitute a propeptide that is removed on maturation. 4 cysteine pairs are disulfide-bonded: C54–C72, C65–C78, C69–C116, and C71–C87.

Expressed by the venom gland.

It localises to the secreted. Its function is as follows. No toxicity is observed upon intracranial injection into mice and intrathorax injection into crickets. The sequence is that of U13-hexatoxin-Mg1a from Macrothele gigas (Japanese funnel web spider).